The following is a 154-amino-acid chain: Lymphocyte antigen 6K (154 aa).

An N-terminal signal peptide occupies residues 1–20; sequence MAFLVALLVVLGLQLVQSNA. Positions 21–117 constitute a UPAR/Ly6 domain; the sequence is LTCHVCEAQN…NGEGPPTDQL (97 aa). Gly123 is lipidated: GPI-anchor amidated glycine. A propeptide spans 124 to 154 (removed in mature form); sequence KASGRRHRYIELLLTGFMVLTANGLSALCLL.

Interacts with ADAM3 and TEX101. In terms of tissue distribution, strongly expressed in testes and weakly expressed in the epididymis, ovary, and uterus. Expressed in testicular germ cells (TGCs). Expressed in the testicular seminiferous tubules, in spermatocytes, spermatids, and testicular spermatozoa.

It is found in the secreted. The protein resides in the cytoplasm. Its subcellular location is the cell membrane. It localises to the cytoplasmic vesicle. The protein localises to the secretory vesicle. It is found in the acrosome. The protein resides in the membrane raft. Required for sperm migration into the oviduct and male fertility by controlling binding of sperm to zona pellucida. May play a role in cell growth. The chain is Lymphocyte antigen 6K from Mus musculus (Mouse).